A 585-amino-acid polypeptide reads, in one-letter code: Conglutin alpha 3 (585 aa).

Positions methionine 1–glycine 23 are cleaved as a signal peptide. Disulfide bonds link cysteine 32–cysteine 65 and cysteine 108–cysteine 406. Residues leucine 37 to histidine 258 form the Cupin type-1 1 domain. 3 disordered regions span residues glutamate 113–glutamate 147, glutamate 199–glycine 240, and lysine 283–glutamate 402. The segment covering glutamate 136 to glutamate 147 has biased composition (basic and acidic residues). The span at arginine 211–glutamine 224 shows a compositional bias: basic residues. Positions arginine 309–proline 320 are enriched in acidic residues. The segment covering glutamate 338–arginine 350 has biased composition (basic and acidic residues). In terms of domain architecture, Cupin type-1 2 spans glutamate 412–serine 558. A compositionally biased stretch (polar residues) spans asparagine 565–histidine 579. The disordered stretch occupies residues asparagine 565–alanine 585.

This sequence belongs to the 11S seed storage protein (globulins) family. As to quaternary structure, hexamer; each subunit is composed of an acidic and a basic chain derived from a single precursor and linked by a disulfide bond. Component of globulins complexes which accumulate in seeds.

Functionally, sulfur-rich seed storage protein. This protein found in the seeds of many leguminous and non-leguminous plants is the source of sulfur-containing amino acids in seed meals. This Lupinus angustifolius (Narrow-leaved blue lupine) protein is Conglutin alpha 3.